The following is a 161-amino-acid chain: UPF0262 protein Rru_A2770 (161 aa).

It belongs to the UPF0262 family.

The polypeptide is UPF0262 protein Rru_A2770 (Rhodospirillum rubrum (strain ATCC 11170 / ATH 1.1.1 / DSM 467 / LMG 4362 / NCIMB 8255 / S1)).